The chain runs to 548 residues: Protein swallow (548 aa).

Disordered regions lie at residues 67 to 109 (AKTC…GRSS), 184 to 206 (NCQTHSNSDSNYNSNSNNSSSSF), and 358 to 428 (FSSV…ELIS). The span at 79–91 (QEDEDDYDEDVDG) shows a compositional bias: acidic residues. Positions 189 to 205 (SNSDSNYNSNSNNSSSS) are enriched in low complexity. A phosphoserine mark is found at Ser362 and Ser368. The span at 388–402 (APNNSETSQPSSNDS) shows a compositional bias: polar residues. Residues 406–420 (VEAHEEERPSSRRQW) are compositionally biased toward basic and acidic residues. Phosphoserine is present on residues Ser463, Ser471, Ser475, Ser483, Ser485, and Ser487.

In terms of assembly, may be a homo- or heterodimer.

Its subcellular location is the nucleus. In terms of biological role, has a role in localizing bicoid mRNA at the anterior margin of the oocyte during oogenesis, and a poorly characterized role in nuclear divisions in early embryogenesis. The sequence is that of Protein swallow (swa) from Drosophila melanogaster (Fruit fly).